Here is a 110-residue protein sequence, read N- to C-terminus: MHEMSITQSVVEICEVHAAGRKVTEVVLLIGELSGVVPESVEFCFEACSKGTLLEGARLQLELVLGVGSCPACHGEFPISTLFEPCPGCGAFGLSVVAGEELRVKELELE.

Residue His2 participates in Ni(2+) binding. Zn(2+)-binding residues include Cys70, Cys73, Cys86, and Cys89.

It belongs to the HypA/HybF family.

Its function is as follows. Involved in the maturation of [NiFe] hydrogenases. Required for nickel insertion into the metal center of the hydrogenase. The polypeptide is Hydrogenase maturation factor HypA (Geobacter sp. (strain M21)).